We begin with the raw amino-acid sequence, 159 residues long: Transcription repressor OFP6 (159 aa).

Positions 39–60 (PKRPSSTYRHCHSSISSATPSS) are disordered. A compositionally biased stretch (low complexity) spans 51 to 60 (SSISSATPSS). The OVATE domain maps to 70–129 (VEKDSDDPYLDFRQSMLQMILENQIYSKDELRELLQCFLSLNSHYHHGIIVRAFSEIWED).

In terms of assembly, interacts with KNAT1 and KNAT7. In terms of tissue distribution, expressed in roots, shoots, rosette and cauline leaves, stems, flower buds and siliques.

It localises to the nucleus. Its function is as follows. Transcriptional repressor that regulates multiple aspects of plant growth and development through the regulation of BEL1-LIKE (BLH) and KNOX TALE (KNAT) homeodomain transcription factors. The polypeptide is Transcription repressor OFP6 (OFP6) (Arabidopsis thaliana (Mouse-ear cress)).